A 521-amino-acid chain; its full sequence is Cytochrome P450 monooxygenase 105 (521 aa).

A helical membrane pass occupies residues Gly-12–Leu-32. Residues Asn-218, Asn-274, and Asn-317 are each glycosylated (N-linked (GlcNAc...) asparagine). Cys-449 provides a ligand contact to heme.

Belongs to the cytochrome P450 family. Heme serves as cofactor.

It localises to the membrane. The protein operates within secondary metabolite biosynthesis. In terms of biological role, cytochrome P450 monooxygenase that is able to use anthracene, carbazole, pyrene, phenanthrene and trans-stilbene as substrates for oxidation. These multifunctional properties against a series of polycyclic aromatic hydrocarbons (PAHs) suggest that CYP105 would play important roles, at least in part, in fungal metabolic systems involved in xenobiotic detoxification. This is Cytochrome P450 monooxygenase 105 from Postia placenta (strain ATCC 44394 / Madison 698-R) (Brown rot fungus).